The following is a 322-amino-acid chain: uncharacterized protein (322 aa).

Residues 1-63 (MFKIRKRSVP…DEASSSDSHY (63 aa)) are disordered. Residues 34–49 (FVDDHGKPIAEYRDFP) show a composition bias toward basic and acidic residues. The C3H1-type zinc finger occupies 245 to 274 (WKVDRICTYYINRPDKCTRGDNCRFKHDDV). Residues 278-322 (HRQKEIQSSRNQSWHHRTSSHKYSSENSDHRGYRRHRSRSPHARQ) form a disordered region. Residues 309–322 (GYRRHRSRSPHARQ) are compositionally biased toward basic residues.

This is an uncharacterized protein from Caenorhabditis elegans.